A 126-amino-acid chain; its full sequence is Holo-[acyl-carrier-protein] synthase (126 aa).

2 residues coordinate Mg(2+): Asp-9 and Glu-58.

Belongs to the P-Pant transferase superfamily. AcpS family. Mg(2+) serves as cofactor.

It localises to the cytoplasm. It carries out the reaction apo-[ACP] + CoA = holo-[ACP] + adenosine 3',5'-bisphosphate + H(+). Transfers the 4'-phosphopantetheine moiety from coenzyme A to a Ser of acyl-carrier-protein. The chain is Holo-[acyl-carrier-protein] synthase from Buchnera aphidicola subsp. Schizaphis graminum (strain Sg).